The following is a 49-amino-acid chain: Large ribosomal subunit protein bL32 (49 aa).

It belongs to the bacterial ribosomal protein bL32 family.

The chain is Large ribosomal subunit protein bL32 from Nitratiruptor sp. (strain SB155-2).